The following is a 489-amino-acid chain: Tyrosine-protein phosphatase MSG5 (489 aa).

Residues 1–18 (MQFHSDKQHLDSKTDIDF) show a composition bias toward basic and acidic residues. Positions 1–30 (MQFHSDKQHLDSKTDIDFKPNSPRSLQNRN) are disordered. Serine 22, serine 98, and serine 151 each carry phosphoserine. Phosphothreonine is present on threonine 178. The Tyrosine-protein phosphatase domain occupies 233-375 (GPLLVLPPNL…LMEWGTMLSK (143 aa)). Cysteine 319 serves as the catalytic Phosphocysteine intermediate. Disordered stretches follow at residues 375-401 (KNSP…VSST) and 419-489 (LSSS…MFLP). The span at 419 to 450 (LSSSPNDSSVNSSEVTPRTPATLTGARTALAT) shows a compositional bias: low complexity. Over residues 451 to 460 (ERGEDDEHCK) the composition is skewed to basic and acidic residues.

It belongs to the protein-tyrosine phosphatase family. Non-receptor class dual specificity subfamily.

The enzyme catalyses O-phospho-L-tyrosyl-[protein] + H2O = L-tyrosyl-[protein] + phosphate. Dual specificity phosphatase that dephosphorylates MAP kinase FUS3 on both a Tyr and a Ser or Thr. Has a role in adaptation to pheromone. This chain is Tyrosine-protein phosphatase MSG5 (MSG5), found in Saccharomyces cerevisiae (strain ATCC 204508 / S288c) (Baker's yeast).